The sequence spans 484 residues: MSDRVRVRYAPSPTGYLHIGNARTALFNYLFAKHYDGDFVIRIEDTDSKRNLVDGESSQFDNLKWLGIEWDESVDKDKGYGPYRQSERAEIYNPLIQQLLDEDKAYKCYMTEDELEEERQQQIERGEMPRYGGKHAHLTEEERQQFEAEGRKPSIRFRVPKDTTYSFDDMVKGEISFDSNNMGDWVIVKKDGIPTYNFAVAIDDHYMEISDVIRGDDHISNTPKQLMIYETFGWEAPRFAHMSLIVNEERKKLSKRDGQILQFIEQYRDLGYLPEALFNFITLLGWSPEGENEIYSKEDFIKIFDEKRLSKSPAFFDKQKLAWVNNQYMKQKDTETVFELALPHLIKAELLPENPSEADLDWGRKLVSLYQKEMSYAGEIVPLSELFFRDEQTLGDDEQEVIAGEQVPELMNHLYSKLEALEPFEAAEIKKTIKEVQKETGIKGKQLFMPIRVAVTGQMHGPELPNTIEVLGKDKVLSRLKKYV.

The short motif at 11 to 21 (PSPTGYLHIGN) is the 'HIGH' region element. The short motif at 252-256 (KLSKR) is the 'KMSKS' region element. Residue Lys-255 participates in ATP binding.

The protein belongs to the class-I aminoacyl-tRNA synthetase family. Glutamate--tRNA ligase type 1 subfamily. As to quaternary structure, monomer.

The protein resides in the cytoplasm. The enzyme catalyses tRNA(Glu) + L-glutamate + ATP = L-glutamyl-tRNA(Glu) + AMP + diphosphate. Functionally, catalyzes the attachment of glutamate to tRNA(Glu) in a two-step reaction: glutamate is first activated by ATP to form Glu-AMP and then transferred to the acceptor end of tRNA(Glu). The protein is Glutamate--tRNA ligase of Staphylococcus saprophyticus subsp. saprophyticus (strain ATCC 15305 / DSM 20229 / NCIMB 8711 / NCTC 7292 / S-41).